Here is a 341-residue protein sequence, read N- to C-terminus: Anthranilate phosphoribosyltransferase (341 aa).

5-phospho-alpha-D-ribose 1-diphosphate is bound by residues Gly-81, 84–85 (GD), 91–94 (NVST), 109–117 (KHGNRSVSS), and Ser-121. Position 81 (Gly-81) interacts with anthranilate. Ser-93 contacts Mg(2+). Asn-112 provides a ligand contact to anthranilate. An anthranilate-binding site is contributed by Arg-167. 2 residues coordinate Mg(2+): Asp-226 and Glu-227.

This sequence belongs to the anthranilate phosphoribosyltransferase family. In terms of assembly, homodimer. Mg(2+) serves as cofactor.

It carries out the reaction N-(5-phospho-beta-D-ribosyl)anthranilate + diphosphate = 5-phospho-alpha-D-ribose 1-diphosphate + anthranilate. It functions in the pathway amino-acid biosynthesis; L-tryptophan biosynthesis; L-tryptophan from chorismate: step 2/5. Its function is as follows. Catalyzes the transfer of the phosphoribosyl group of 5-phosphorylribose-1-pyrophosphate (PRPP) to anthranilate to yield N-(5'-phosphoribosyl)-anthranilate (PRA). The chain is Anthranilate phosphoribosyltransferase from Saccharophagus degradans (strain 2-40 / ATCC 43961 / DSM 17024).